The chain runs to 113 residues: UPF0339 protein MS1092 (113 aa).

2 tandem repeats follow at residues 11–59 and 62–110.

This sequence belongs to the UPF0339 family. Duplicated subfamily.

In Mannheimia succiniciproducens (strain KCTC 0769BP / MBEL55E), this protein is UPF0339 protein MS1092.